We begin with the raw amino-acid sequence, 330 residues long: Cytosolic iron-sulfur protein assembly protein 1 (330 aa).

7 WD repeats span residues 12-53 (LYKE…DVLD), 56-95 (AHKK…DRTF), 105-144 (GHEN…EEYE), 151-190 (EHSQ…WECV), 195-236 (GHEG…EDDQ), 248-286 (VHKR…WKVF), and 292-330 (CHGV…EKAA).

The protein belongs to the WD repeat CIA1 family. In terms of assembly, interacts with NAR1.

The protein resides in the cytoplasm. It is found in the nucleus. Functionally, essential component of the cytosolic iron-sulfur (Fe/S) protein assembly machinery. Required for the maturation of extramitochondrial Fe/S proteins. The chain is Cytosolic iron-sulfur protein assembly protein 1 from Saccharomyces cerevisiae (strain ATCC 204508 / S288c) (Baker's yeast).